Here is a 261-residue protein sequence, read N- to C-terminus: MAALTADRVSVRYPGQAQPALDGVSLNVGPGELAVALGPSGCGKTTLLNLFAGFQFPDSGSVRFGGVPVAGPGAERAVVFQQHALLPWLSALDNVAFGLRLRGVPRAERRELAGRALAQVDLAEAGARYPWQLSGGQKQRVGIARALAGRAGALLMDEPFGALDAFTREQMQELLLKVWAESGSSVFLITHDIEEALFLATELVLMSPGPGRIVKTLRPPFSRRWRAGDSARAIKSDPEFIALREQLLADVFAQRKQEAWA.

The 230-residue stretch at 4 to 233 (LTADRVSVRY…RWRAGDSARA (230 aa)) folds into the ABC transporter domain. 38–45 (GPSGCGKT) is a binding site for ATP.

The protein belongs to the ABC transporter superfamily. Taurine importer (TC 3.A.1.17.1) family. In terms of assembly, the complex is composed of two ATP-binding proteins (TauB), two transmembrane proteins (TauC) and a solute-binding protein (TauA).

It localises to the cell inner membrane. The catalysed reaction is taurine(out) + ATP + H2O = taurine(in) + ADP + phosphate + H(+). In terms of biological role, part of the ABC transporter complex TauABC involved in taurine import. Responsible for energy coupling to the transport system. This Chromobacterium violaceum (strain ATCC 12472 / DSM 30191 / JCM 1249 / CCUG 213 / NBRC 12614 / NCIMB 9131 / NCTC 9757 / MK) protein is Taurine import ATP-binding protein TauB.